The chain runs to 297 residues: Putative lipid kinase MamU (297 aa).

The 89-residue stretch at E43–Y131 folds into the DAGKc domain. G68–R74 provides a ligand contact to ATP. The active-site Proton acceptor is the E274.

Belongs to the diacylglycerol/lipid kinase family.

The protein localises to the cytoplasm. Functionally, might phosphorylate lipids. In Magnetospirillum gryphiswaldense (strain DSM 6361 / JCM 21280 / NBRC 15271 / MSR-1), this protein is Putative lipid kinase MamU.